Consider the following 465-residue polypeptide: Ribulose bisphosphate carboxylase large chain (465 aa).

K4 is subject to N6,N6,N6-trimethyllysine. Substrate contacts are provided by N113 and T163. The active-site Proton acceptor is the K165. K167 provides a ligand contact to substrate. Residues K191, D193, and E194 each coordinate Mg(2+). N6-carboxylysine is present on K191. H284 functions as the Proton acceptor in the catalytic mechanism. The substrate site is built by R285, H317, and S369.

Belongs to the RuBisCO large chain family. Type I subfamily. Heterohexadecamer of 8 large chains and 8 small chains; disulfide-linked. The disulfide link is formed within the large subunit homodimers. Requires Mg(2+) as cofactor. In terms of processing, the disulfide bond which can form in the large chain dimeric partners within the hexadecamer appears to be associated with oxidative stress and protein turnover.

The protein localises to the plastid. The protein resides in the chloroplast. It carries out the reaction 2 (2R)-3-phosphoglycerate + 2 H(+) = D-ribulose 1,5-bisphosphate + CO2 + H2O. The catalysed reaction is D-ribulose 1,5-bisphosphate + O2 = 2-phosphoglycolate + (2R)-3-phosphoglycerate + 2 H(+). Functionally, ruBisCO catalyzes two reactions: the carboxylation of D-ribulose 1,5-bisphosphate, the primary event in carbon dioxide fixation, as well as the oxidative fragmentation of the pentose substrate in the photorespiration process. Both reactions occur simultaneously and in competition at the same active site. The protein is Ribulose bisphosphate carboxylase large chain of Ilex crenata (Japanese holly).